A 325-amino-acid polypeptide reads, in one-letter code: MIARIWSGESPLWRLLLPLSWLYGLVSGAIRLSYKLGFKRAWRAPVPVVVVGNLTAGGNGKTPVVIWLVEKLQQRGVRVGVVSRGYGGKAAAYPLLLTPETTTAEAGDEPVLIYQRTGAPVAVAPERAAAVKAILAAHNVQIIITDDGLQHYRLARDIEIVVIDGVRRFGNGWWLPAGPMRERASRLKTVDAAIVNGGVARAGEIPMQLAPGLAVNLRTGARCDVAQLSNIVAMAGIGHPPRFFATLEACGAHPQKCVPLADHQTLAPADVQALVGEGQTLVMTEKDAVKCRAFAEDNWWFLPVDARLSGEQPDKLLEHITSLVR.

55-62 contributes to the ATP binding site; the sequence is TAGGNGKT.

The protein belongs to the LpxK family.

It catalyses the reaction a lipid A disaccharide + ATP = a lipid IVA + ADP + H(+). Its pathway is glycolipid biosynthesis; lipid IV(A) biosynthesis; lipid IV(A) from (3R)-3-hydroxytetradecanoyl-[acyl-carrier-protein] and UDP-N-acetyl-alpha-D-glucosamine: step 6/6. Transfers the gamma-phosphate of ATP to the 4'-position of a tetraacyldisaccharide 1-phosphate intermediate (termed DS-1-P) to form tetraacyldisaccharide 1,4'-bis-phosphate (lipid IVA). The chain is Tetraacyldisaccharide 4'-kinase from Salmonella paratyphi C (strain RKS4594).